Consider the following 6874-residue polypeptide: Nesprin-2 (6874 aa).

The segment at 1–286 is actin-binding; that stretch reads MAASPVLPTE…MTYVAQFLKY (286 aa). Residues 1-6823 lie on the Cytoplasmic side of the membrane; sequence MAASPVLPTE…RRSFLSRVIR (6823 aa). Calponin-homology (CH) domains follow at residues 31–136 and 183–288; these read DTQK…LHFH and WSAK…KYSK. 4 Spectrin repeats span residues 299-380, 381-474, 475-577, and 578-680; these read AKVR…HQVA, AWRA…RINN, VLGK…QYIH, and NTKA…IQDQ. Positions 299-6767 form a coiled coil; the sequence is AKVRDALVWL…PDASLTSFDE (6469 aa). Residues 675–723 are disordered; the sequence is VKIQDQPPGNSSGTSLSKESAMAAEPGGSRGEDVKAAEKQEVEDEESAG. Polar residues predominate over residues 681-692; it reads PPGNSSGTSLSK. Basic and acidic residues predominate over residues 704–714; sequence RGEDVKAAEKQ. Spectrin repeat units lie at residues 727-834, 835-928, 929-1030, 1120-1211, 1262-1322, 1323-1409, 1410-1514, 1515-1626, 1627-1728, 1729-1820, 1821-1928, 1929-2026, 2027-2122, 2123-2233, 2234-2350, 2422-2503, 2504-2610, 2611-2707, 2708-2821, 2822-2923, 2924-3027, 3028-3133, 3134-3239, 3240-3343, 3344-3456, 3457-3563, 3564-3669, 3670-3767, 3768-3870, 3871-3976, and 3977-4074; these read VNEE…KNLS, DEPL…LRHE, ISLY…KCAS, TQRG…LLNT, DIRD…DALD, ALEG…QSKE, EGPP…ASVT, ESLE…KTEE, YGEN…AGGS, NSYA…TKKN, ALQD…AGEL, NNSF…EEED, KLPA…LANT, YLSH…SVQK, LEGH…LNSI, DERE…TLKK, TKER…KCFQ, QATE…EALE, PLNR…QLEL, KLEE…FLQN, NGSE…GKIK, QLDT…NMLL, ELQP…SLRA, DVLN…AQEA, EEER…QWGG, ELKR…TTRK, NKDL…SSEV, SKSS…ESRT, SQLN…QIME, ALPH…VTQE, and QNEL…KPSA. The segment at 2338 to 2397 is disordered; the sequence is SAKQETENGLNSILKSKSSTEKHVKFSLPVEEMPATSEVPKPTRESAAVGESGGARETNT. The span at 2344 to 2354 shows a compositional bias: polar residues; it reads ENGLNSILKSK. Disordered stretches follow at residues 4062-4152, 4171-4193, 4326-4348, and 4401-4429; these read KQEQ…ATIV, APDS…TDEG, FSED…DQPA, and HQEN…DSTL. Positions 4081–4091 are enriched in basic and acidic residues; it reads VAERDASERKL. Ser4096 carries the post-translational modification Phosphoserine. Basic and acidic residues predominate over residues 4110-4122; sequence SSVKSEDGRRRTE. The stretch at 4218–4337 is one Spectrin 36 repeat; sequence RSRPRPADIL…EDQHPSTLKK (120 aa). A compositionally biased stretch (basic and acidic residues) spans 4326 to 4345; the sequence is FSEDQHPSTLKKPSEPHDVD. A compositionally biased stretch (polar residues) spans 4409 to 4429; that stretch reads RQSASSSKVPSPGNAASDSTL. Spectrin repeat units lie at residues 4507-4626, 4627-4714, 4715-4823, 4824-4929, 4930-5037, 5038-5150, 5151-5252, 5253-5377, 5378-5473, 5474-5576, 5577-5691, 5692-5786, 5787-5894, 5895-6004, 6005-6122, 6123-6230, and 6231-6342; these read SMTE…RSYQ, NEVK…RARY, LELS…QSML, QKWE…QTLL, KHLL…QEKL, HQLQ…KIQH, LEQL…SQVH, QLRA…KAPH, NAHA…MLLA, KSNE…YSEL, QGNG…QWRF, FTTS…LSLG, EVIS…RVAI, RKQE…VKKL, KETF…EETW, RLWQ…LRYF, and TNQR…PGLD. Positions 5435–5459 are disordered; it reads NSTLSDQLPQPEERSTPGLHSGQRH. Phosphoserine is present on Ser5772. The interval 6336–6473 is disordered; that stretch reads SHTPGLDDEK…TEAPVPTDAS (138 aa). Positions 6341 to 6354 are enriched in acidic residues; that stretch reads LDDEKEASENETDI. Residues Ser6348, Ser6371, Ser6400, Ser6417, Ser6418, Ser6419, and Ser6448 each carry the phosphoserine modification. Residues 6355 to 6372 show a composition bias toward basic and acidic residues; it reads EDPREIQADSWRKRRESE. 3 Spectrin repeats span residues 6450–6534, 6535–6650, and 6651–6767; these read SHSK…KLRL, KQTV…QCQD, and FHQL…SFDE. Residues 6790 to 6812 form a disordered region; it reads EEEEEEEETDSRMPHLDSPGSSQ. A KASH domain is found at 6815 to 6874; the sequence is RSFLSRVIRAALPLQLLLLLLLLLACLLPASEDDYSCTQANNFARSFYPMLRYTNGPPPT. Residues 6824–6844 traverse the membrane as a helical; Anchor for type IV membrane protein segment; sequence AALPLQLLLLLLLLLACLLPA. Over 6845–6874 the chain is Perinuclear space; that stretch reads SEDDYSCTQANNFARSFYPMLRYTNGPPPT. The interval 6861–6874 is sufficient for interaction with SUN2; that stretch reads FYPMLRYTNGPPPT.

Belongs to the nesprin family. In terms of assembly, core component of LINC complexes which are composed of inner nuclear membrane SUN domain-containing proteins coupled to outer nuclear membrane KASH domain-containing nesprins. SUN and KASH domain-containing proteins seem to bind each other promiscuously; however, some LINC complex constituents are tissue- or cell type-specific. At least SUN1/2-containing core LINC complexes are proposed to be hexameric composed of three protomers of each KASH and SUN domain-containing protein. The SUN2:SYNE2/KASH2 complex is a heterohexamer; the homotrimeric cloverleave-like conformation of the SUN domain is a prerequisite for LINC complex formation in which three separate SYNE2/KASH2 peptides bind at the interface of adjacent SUN domains. Interacts with EMD, LMNA, MKS3 and F-actin via its N-terminal domain. Interacts with DCTN1 and DYNC1I1/2; suggesting the association with the dynein-dynactin motor complex. Associates with kinesin motor complexes. Interacts with TMEM67. Interacts (via KASH domain) with TMEM258. Interacts with BROX; this interaction promotes SYN2 ubiquitination and facilitates the relaxation of mechanical stress imposed by compressive actin fibers at the rupture site. Post-translationally, the disulfid bond with SUN2 is required for stability of the SUN2:SYNE2/KASH2 LINC complex under tensile forces though not required for the interaction. In terms of tissue distribution, C-terminal isoforms are highly expressed in the brain, hert and skeletal muscle. Isoform 1 (Nesprin-2 Giant) is most prevalent in the brain, skin, kidney and skeletal muscle.

The protein resides in the nucleus outer membrane. It localises to the sarcoplasmic reticulum membrane. It is found in the cell membrane. The protein localises to the cytoplasm. Its subcellular location is the cytoskeleton. The protein resides in the mitochondrion. It localises to the nucleus. It is found in the nucleoplasm. In terms of biological role, multi-isomeric modular protein which forms a linking network between organelles and the actin cytoskeleton to maintain the subcellular spatial organization. As a component of the LINC (LInker of Nucleoskeleton and Cytoskeleton) complex involved in the connection between the nuclear lamina and the cytoskeleton. The nucleocytoplasmic interactions established by the LINC complex play an important role in the transmission of mechanical forces across the nuclear envelope and in nuclear movement and positioning. Specifically, SYNE2 and SUN2 assemble in arrays of transmembrane actin-associated nuclear (TAN) lines which are bound to F-actin cables and couple the nucleus to retrograde actin flow during actin-dependent nuclear movement. May be involved in nucleus-centrosome attachment. During interkinetic nuclear migration (INM) at G2 phase and nuclear migration in neural progenitors its LINC complex association with SUN1/2 and probable association with cytoplasmic dynein-dynactin motor complexes functions to pull the nucleus toward the centrosome; SYNE1 and SYNE2 seem to act redundantly in cerebellum, midbrain, brain stem, and other brain regions except cerebral cortex and hippocampus. During INM at G1 phase mediates respective LINC complex association with kinesin to push the nucleus away from the centrosome. Involved in nuclear migration in retinal photoreceptor progenitors. Required for centrosome migration to the apical cell surface during early ciliogenesis. This is Nesprin-2 from Mus musculus (Mouse).